The chain runs to 366 residues: Lysophosphatidic acid receptor 1-B (366 aa).

Topologically, residues 1-52 (MTSLSEFVSEPIGMMSQTSAASESQCYYNETIAFFYNRSGKYLDTEWNAVSK) are extracellular. Cystine bridges form between Cys-26/Cys-192 and Cys-190/Cys-197. N-linked (GlcNAc...) asparagine glycans are attached at residues Asn-29 and Asn-37. Residue Lys-41 coordinates a 1-acyl-sn-glycero-3-phosphate. Residues 53-77 (LVMGLGITVCIFIMLANLLVMVAIY) form a helical membrane-spanning segment. The Cytoplasmic segment spans residues 78 to 85 (VNRRFHFP). A helical transmembrane segment spans residues 86–109 (IYYLMANLAAADFFAGLAYFYLMF). Residues 110–123 (NTGPNTRRLTVSTW) are Extracellular-facing. The chain crosses the membrane as a helical span at residues 124–146 (LLRQGLIDTSLTASVANLLAIAI). Residue 126–131 (RQGLID) participates in a 1-acyl-sn-glycero-3-phosphate binding. The Cytoplasmic portion of the chain corresponds to 147-165 (ERHITVFRMQLHTRMSNRR). The helical transmembrane segment at 166–186 (VVVVIVVIWTVAIVMGAIPSV) threads the bilayer. Residues 187-206 (GWNCICDLEHCSNMAPLYSD) are Extracellular-facing. A helical transmembrane segment spans residues 207–227 (SYLIFWTIFNLVTFVVMVVLY). Trp-212 serves as a coordination point for a 1-acyl-sn-glycero-3-phosphate. The Cytoplasmic segment spans residues 228 to 257 (AHIFVYVRQRTMRMSRHSSGPRRNRDTMMS). A helical membrane pass occupies residues 258–282 (LLKTVVIVLGAFIVCWTPGLVLLLL). Over 283 to 296 (DVCCPQCNILAYEK) the chain is Extracellular. An intrachain disulfide couples Cys-286 to Cys-289. The chain crosses the membrane as a helical span at residues 297 to 317 (FFLLLAEFNSAMNPIIYSYRD). Residues 318–366 (KEMSATFKQILCCQRTENVNGPTEGSDRSASSLNHTILAGVHSNDHSVV) lie on the Cytoplasmic side of the membrane.

This sequence belongs to the G-protein coupled receptor 1 family. Expressed at high levels in oocytes and at lower levels in brain and spinal cord. Below detection level in lung, heart, kidney, liver, muscle, stomach, and intestine.

It is found in the cell surface. It localises to the cell membrane. Its subcellular location is the endosome. Receptor for lysophosphatidic acid (LPA). Plays a role in the reorganization of the actin cytoskeleton, cell migration, differentiation and proliferation, and thereby contributes to the responses to tissue damage and infectious agents. Activates downstream signaling cascades via the G(i)/G(o), G(12)/G(13), and G(q) families of heteromeric G proteins. Signaling inhibits adenylyl cyclase activity and decreases cellular cAMP levels. Signaling triggers an increase of cytoplasmic Ca(2+) levels. Signaling leads to the activation of phospholipase C (PLC) and the formation of inositol 1,4,5-trisphosphate. Signaling mediates activation of down-stream MAP kinases. Contributes to the regulation of cell shape. Promotes Rho-dependent reorganization of the actin cytoskeleton in neuronal cells and neurite retraction. Promotes the activation of Rho and the formation of actin stress fibers. Promotes formation of lamellipodia at the leading edge of migrating cells via activation of Rac. Through its function as lysophosphatidic acid receptor, plays a role in chemotaxis and cell migration, including responses to injury and wounding. Promotes cell proliferation in response to lysophosphatidic acid. In Xenopus laevis (African clawed frog), this protein is Lysophosphatidic acid receptor 1-B (lpar1-b).